Reading from the N-terminus, the 21-residue chain is Dahlein-5.5 (21 aa).

In terms of tissue distribution, expressed by the skin dorsal glands.

Its subcellular location is the secreted. In terms of biological role, has no antimicrobial activity. Strongly inhibits the formation of NO by neuronal nitric oxide synthase at micromolar concentrations. The chain is Dahlein-5.5 from Ranoidea dahlii (Dahl's aquatic frog).